The following is a 189-amino-acid chain: ATP synthase subunit b 1 (189 aa).

A helical transmembrane segment spans residues 32-52 (TYFASQLFWLTIAFVILYIAL).

Belongs to the ATPase B chain family. As to quaternary structure, F-type ATPases have 2 components, F(1) - the catalytic core - and F(0) - the membrane proton channel. F(1) has five subunits: alpha(3), beta(3), gamma(1), delta(1), epsilon(1). F(0) has three main subunits: a(1), b(2) and c(10-14). The alpha and beta chains form an alternating ring which encloses part of the gamma chain. F(1) is attached to F(0) by a central stalk formed by the gamma and epsilon chains, while a peripheral stalk is formed by the delta and b chains.

The protein resides in the cell inner membrane. Functionally, f(1)F(0) ATP synthase produces ATP from ADP in the presence of a proton or sodium gradient. F-type ATPases consist of two structural domains, F(1) containing the extramembraneous catalytic core and F(0) containing the membrane proton channel, linked together by a central stalk and a peripheral stalk. During catalysis, ATP synthesis in the catalytic domain of F(1) is coupled via a rotary mechanism of the central stalk subunits to proton translocation. Component of the F(0) channel, it forms part of the peripheral stalk, linking F(1) to F(0). This is ATP synthase subunit b 1 from Maricaulis maris (strain MCS10) (Caulobacter maris).